The following is a 243-amino-acid chain: Transmembrane protein 174 (243 aa).

The next 2 membrane-spanning stretches (helical) occupy residues 40–60 (LLFSGIFLGLVGITFTVMGWI) and 73–93 (LLGPVLLSVGVTFILIAVCKF).

In terms of assembly, interacts with SLC34A1; regulates SLC34A1 internalization by PTH and FGF23. In terms of tissue distribution, predominantly expressed in kidney. Selectively localized in the apical membrane of renal proximal tubule epithelial cells.

Its subcellular location is the endoplasmic reticulum membrane. It localises to the apical cell membrane. Its function is as follows. Regulator of plasma phosphate homeostasis. Decreases serum inorganic phosphate (Pi) uptake by regulating the sodium-phosphate cotransporter SLC34A1 trafficking by PTH and FGF23 in the kidney. The polypeptide is Transmembrane protein 174 (TMEM174) (Homo sapiens (Human)).